Consider the following 378-residue polypeptide: MKLKEVTEGKVRIFVPDPTGYMVEGKFDPSWAPVFYNPKMTFNRDLSVIVVSILKPKIIVDALSATGIRGIRYYVESWKSEQLILNDKNPNATSLIQINAKNNGIENAKIYNKDANALLYEVKSDYIDIDPFGSPAPFILSSLNAATRNGIVAFTATDLSPLEGSSPTSCRRKYDAINHKLSSSKELGLRVLIGKIIREAAILEKTVYPLFSFYADYYYRLFVRVENGARKADDNINKHLKYFGECPRCGFQTFVEENCKTKCPVCGEIFSIIGPLYIGPLYSMEFLKRIMDLYSNFNYLTSFNRIQKLLNVIEKEARFKNVFYNISKLASKLKISAIPPIESILECLGDASRTHFAPTGIRTDKEYEEITKCIKSLR.

The 371-residue stretch at 4-374 folds into the Trm1 methyltransferase domain; that stretch reads KEVTEGKVRI…KEYEEITKCI (371 aa). R44, R69, D87, D114, and A115 together coordinate S-adenosyl-L-methionine. Zn(2+)-binding residues include C246, C249, C263, and C266.

This sequence belongs to the class I-like SAM-binding methyltransferase superfamily. Trm1 family.

The catalysed reaction is guanosine(26) in tRNA + 2 S-adenosyl-L-methionine = N(2)-dimethylguanosine(26) in tRNA + 2 S-adenosyl-L-homocysteine + 2 H(+). Functionally, dimethylates a single guanine residue at position 26 of a number of tRNAs using S-adenosyl-L-methionine as donor of the methyl groups. The protein is tRNA (guanine(26)-N(2))-dimethyltransferase of Saccharolobus solfataricus (strain ATCC 35092 / DSM 1617 / JCM 11322 / P2) (Sulfolobus solfataricus).